Reading from the N-terminus, the 144-residue chain is Small ribosomal subunit protein bS6 (144 aa).

Residues 97 to 144 (DTEQSLIMKSKDEKGDKPERSERRRRDDEEVDAAPAATDTDGDNAEAA) are disordered. A compositionally biased stretch (basic and acidic residues) spans 105 to 124 (KSKDEKGDKPERSERRRRDD).

This sequence belongs to the bacterial ribosomal protein bS6 family.

Its function is as follows. Binds together with bS18 to 16S ribosomal RNA. In Xanthomonas campestris pv. campestris (strain B100), this protein is Small ribosomal subunit protein bS6.